Here is a 198-residue protein sequence, read N- to C-terminus: Peptide deformylase (198 aa).

C123 and H167 together coordinate Fe cation. The active site involves E168. Residue H171 participates in Fe cation binding.

Belongs to the polypeptide deformylase family. Requires Fe(2+) as cofactor.

The enzyme catalyses N-terminal N-formyl-L-methionyl-[peptide] + H2O = N-terminal L-methionyl-[peptide] + formate. Removes the formyl group from the N-terminal Met of newly synthesized proteins. Requires at least a dipeptide for an efficient rate of reaction. N-terminal L-methionine is a prerequisite for activity but the enzyme has broad specificity at other positions. This is Peptide deformylase from Ureaplasma parvum serovar 3 (strain ATCC 27815 / 27 / NCTC 11736).